We begin with the raw amino-acid sequence, 178 residues long: CASP-like protein 2A2 (178 aa).

Topologically, residues 1–22 (MDKTDQTAIDESALVLNRTEKS) are cytoplasmic. The chain crosses the membrane as a helical span at residues 23–43 (AEAVLRVASMALSITGLVIMI). Topologically, residues 44–69 (KNSISNEFGSVSYSNIGAFMYLVSAN) are extracellular. Residues 70 to 90 (GVCAAYSLLSALAILALPCPI) form a helical membrane-spanning segment. Residues 91–96 (SKVQVR) lie on the Cytoplasmic side of the membrane. The helical transmembrane segment at 97 to 117 (TLFLLDQVVTYVVLAAGAVSA) threads the bilayer. The Extracellular portion of the chain corresponds to 118–145 (ETVYLAYYGNIPITWSSACDSYGSFCHN). A helical transmembrane segment spans residues 146 to 166 (ALISVVFTFVVSLLYMLLSLI). The Cytoplasmic portion of the chain corresponds to 167 to 178 (SSYRLFTRFEAP).

This sequence belongs to the Casparian strip membrane proteins (CASP) family. Homodimer and heterodimers. Mostly expressed in flowers and buds and, to a lower extent, in roots and yellow siliques. Localized in the floral organ abscission zone.

The protein resides in the cell membrane. Its function is as follows. Involved in floral organ shedding. In Arabidopsis thaliana (Mouse-ear cress), this protein is CASP-like protein 2A2.